We begin with the raw amino-acid sequence, 131 residues long: Biogenesis of lysosome-related organelles complex 1 subunit 5 (131 aa).

The protein belongs to the BLOC1S5 family. As to quaternary structure, component of the biogenesis of lysosome-related organelles complex-1 (BLOC-1) composed at least of blos-1, blos-2, blos-4, dsbn-1, glo-2, mutd-1 and snpn-1.

In terms of biological role, component of the biogenesis of lysosome-related organelles complex-1 (BLOC-1) involved in gut granule biogenesis. The chain is Biogenesis of lysosome-related organelles complex 1 subunit 5 (mutd-1) from Caenorhabditis elegans.